The chain runs to 257 residues: Imidazole glycerol phosphate synthase subunit HisF (257 aa).

Catalysis depends on residues Asp-12 and Asp-131.

The protein belongs to the HisA/HisF family. As to quaternary structure, heterodimer of HisH and HisF.

It localises to the cytoplasm. The enzyme catalyses 5-[(5-phospho-1-deoxy-D-ribulos-1-ylimino)methylamino]-1-(5-phospho-beta-D-ribosyl)imidazole-4-carboxamide + L-glutamine = D-erythro-1-(imidazol-4-yl)glycerol 3-phosphate + 5-amino-1-(5-phospho-beta-D-ribosyl)imidazole-4-carboxamide + L-glutamate + H(+). Its pathway is amino-acid biosynthesis; L-histidine biosynthesis; L-histidine from 5-phospho-alpha-D-ribose 1-diphosphate: step 5/9. Functionally, IGPS catalyzes the conversion of PRFAR and glutamine to IGP, AICAR and glutamate. The HisF subunit catalyzes the cyclization activity that produces IGP and AICAR from PRFAR using the ammonia provided by the HisH subunit. The polypeptide is Imidazole glycerol phosphate synthase subunit HisF (Burkholderia pseudomallei (strain 1106a)).